The following is a 159-amino-acid chain: Thymic stromal lymphopoietin (159 aa).

A signal peptide spans M1 to T28. 3 cysteine pairs are disulfide-bonded: C34/C110, C69/C75, and C90/C137. An N-linked (GlcNAc...) asparagine glycan is attached at N64. A glycan (N-linked (GlcNAc...) asparagine) is linked at N119.

As to quaternary structure, interacts with a receptor composed of CRLF2 and IL7R. Binding of TSLP to CRLF2/TSLPR is a mechanistic prerequisite for recruitment of IL7R to the high-affinity ternary complex. As to expression, isoform 1 is expressed in a number of tissues including heart, liver and prostate. Isoform 2 is the predominant form in keratinocytes of oral mucosa, skin and in salivary glands. It is secreted into saliva.

It localises to the secreted. Functionally, cytokine that induces the release of T-cell-attracting chemokines from monocytes and, in particular, enhances the maturation of CD11c(+) dendritic cells. Can induce allergic inflammation by directly activating mast cells. In terms of biological role, may act as an antimicrobial peptide in the oral cavity and on the skin. The sequence is that of Thymic stromal lymphopoietin (TSLP) from Homo sapiens (Human).